The chain runs to 252 residues: 3-dehydroquinate dehydratase (252 aa).

3-dehydroquinate is bound by residues Ser21, Glu46–Arg48, and Arg82. The Proton donor/acceptor role is filled by His143. Catalysis depends on Lys170, which acts as the Schiff-base intermediate with substrate. The 3-dehydroquinate site is built by Arg213, Ser232, and Gln236.

This sequence belongs to the type-I 3-dehydroquinase family. Homodimer.

The enzyme catalyses 3-dehydroquinate = 3-dehydroshikimate + H2O. Its pathway is metabolic intermediate biosynthesis; chorismate biosynthesis; chorismate from D-erythrose 4-phosphate and phosphoenolpyruvate: step 3/7. Its function is as follows. Involved in the third step of the chorismate pathway, which leads to the biosynthesis of aromatic amino acids. Catalyzes the cis-dehydration of 3-dehydroquinate (DHQ) and introduces the first double bond of the aromatic ring to yield 3-dehydroshikimate. This is 3-dehydroquinate dehydratase from Shigella boydii serotype 4 (strain Sb227).